Reading from the N-terminus, the 281-residue chain is Putative pyruvate, phosphate dikinase regulatory protein (281 aa).

153–160 is a binding site for ADP; the sequence is GISRTSKT.

The protein belongs to the pyruvate, phosphate/water dikinase regulatory protein family. PDRP subfamily.

The enzyme catalyses N(tele)-phospho-L-histidyl/L-threonyl-[pyruvate, phosphate dikinase] + ADP = N(tele)-phospho-L-histidyl/O-phospho-L-threonyl-[pyruvate, phosphate dikinase] + AMP + H(+). It catalyses the reaction N(tele)-phospho-L-histidyl/O-phospho-L-threonyl-[pyruvate, phosphate dikinase] + phosphate + H(+) = N(tele)-phospho-L-histidyl/L-threonyl-[pyruvate, phosphate dikinase] + diphosphate. Functionally, bifunctional serine/threonine kinase and phosphorylase involved in the regulation of the pyruvate, phosphate dikinase (PPDK) by catalyzing its phosphorylation/dephosphorylation. The protein is Putative pyruvate, phosphate dikinase regulatory protein of Bdellovibrio bacteriovorus (strain ATCC 15356 / DSM 50701 / NCIMB 9529 / HD100).